The following is a 264-amino-acid chain: Indole-3-glycerol phosphate synthase (264 aa).

It belongs to the TrpC family.

It carries out the reaction 1-(2-carboxyphenylamino)-1-deoxy-D-ribulose 5-phosphate + H(+) = (1S,2R)-1-C-(indol-3-yl)glycerol 3-phosphate + CO2 + H2O. It functions in the pathway amino-acid biosynthesis; L-tryptophan biosynthesis; L-tryptophan from chorismate: step 4/5. In Xylella fastidiosa (strain 9a5c), this protein is Indole-3-glycerol phosphate synthase.